The primary structure comprises 486 residues: Outer dynein arm-docking complex subunit 4 (486 aa).

TPR repeat units lie at residues 14 to 47, 49 to 81, and 82 to 115; these read FTTY…QPDD, NCLV…NKNY, and FKGL…RPEL. A disordered region spans residues 153 to 180; the sequence is GVHPQNLNPSNKKESKKHSKKTDKGEKT. 4 TPR repeats span residues 314 to 347, 354 to 387, 391 to 424, and 431 to 464; these read GNLH…AKKC, SRAL…ACGG, AWLF…ADDI, and LNAS…AKLL.

Component of the outer dynein arm-docking complex along with ODAD1, ODAD2 and ODAD3.

The protein resides in the cytoplasm. It is found in the cytoskeleton. Its subcellular location is the cilium axoneme. In terms of biological role, component of the outer dynein arm-docking complex (ODA-DC) that mediates outer dynein arms (ODA) binding onto the doublet microtubule. Plays an essential role for the assembly of ODA-DC and in the docking of ODA in ciliary axoneme. The protein is Outer dynein arm-docking complex subunit 4 (odad4) of Danio rerio (Zebrafish).